A 1535-amino-acid polypeptide reads, in one-letter code: Putative protein TIC 214 C-terminal part (1535 aa).

Disordered stretches follow at residues 264 to 283 (ENQK…NSND), 312 to 333 (EQQE…SRKA), and 1263 to 1282 (DYKE…KNNK).

It belongs to the TIC214 family. Part of the Tic complex.

The protein resides in the plastid. The protein localises to the chloroplast. In terms of biological role, involved in protein precursor import into chloroplasts. May be part of an intermediate translocation complex acting as a protein-conducting channel at the inner envelope. This Piper cenocladum (Ant piper) protein is Putative protein TIC 214 C-terminal part.